The following is a 225-amino-acid chain: Receptor-transporting protein 2 (225 aa).

Topologically, residues 1 to 196 (MCTSLTTCEW…RAQAGSGYNF (196 aa)) are cytoplasmic. Residues 52–161 (ASGRFHCSWC…AEFCEACQEG (110 aa)) form a 3CxxC-type zinc finger. Residues 197-219 (LSLRWCLFWASLCLLVVYLQFSF) traverse the membrane as a helical segment. At 220 to 225 (LSPAFF) the chain is on the extracellular side.

Belongs to the TMEM7 family. As to quaternary structure, interacts with olfactory receptors. In terms of tissue distribution, expressed in circumvallate papillae and testis.

Its subcellular location is the cell membrane. Its function is as follows. Specifically promotes functional cell surface expression of olfactory receptors, but not of other GPCRs. The sequence is that of Receptor-transporting protein 2 (RTP2) from Homo sapiens (Human).